The chain runs to 117 residues: Large ribosomal subunit protein bL19 (117 aa).

The protein belongs to the bacterial ribosomal protein bL19 family.

Its function is as follows. This protein is located at the 30S-50S ribosomal subunit interface and may play a role in the structure and function of the aminoacyl-tRNA binding site. The sequence is that of Large ribosomal subunit protein bL19 from Leptothrix cholodnii (strain ATCC 51168 / LMG 8142 / SP-6) (Leptothrix discophora (strain SP-6)).